The sequence spans 113 residues: Tubulin-folding cofactor A (113 aa).

A disordered region spans residues 83 to 113 (LEETDEKEGPEIEDAKKTVADVEKQFPTEDA). Basic and acidic residues predominate over residues 89–113 (KEGPEIEDAKKTVADVEKQFPTEDA).

This sequence belongs to the TBCA family. As to quaternary structure, monomer. Supercomplex made of cofactors A to E. Cofactors A and D function by capturing and stabilizing tubulin in a quasi-native conformation. Cofactor E binds to the cofactor D-tubulin complex; interaction with cofactor C then causes the release of tubulin polypeptides that are committed to the native state. Interacts with TUBB9. In terms of tissue distribution, expressed in leaves, roots, flowers and stems.

In terms of biological role, tubulin-folding protein involved in the control of the alpha-/beta-tubulin monomer balance. Functions as a reservoir of bound and non-toxic beta-tubulin. Required in the developing embryo. The protein is Tubulin-folding cofactor A (TFCA) of Arabidopsis thaliana (Mouse-ear cress).